The following is a 680-amino-acid chain: Forkhead box protein P4 (680 aa).

The span at 1 to 17 shows a compositional bias: polar residues; the sequence is MMVESASETIRSAPSGQ. Positions 1 to 56 are disordered; sequence MMVESASETIRSAPSGQNGVGSLSGQADGSSGGATGTTASGTGREVTTGADSNGEM. S52 and S86 each carry phosphoserine. Glycyl lysine isopeptide (Lys-Gly) (interchain with G-Cter in SUMO2) cross-links involve residues K175 and K246. Residues 262 to 306 form a disordered region; that stretch reads FAAPPKVSPPLSHHTLPNGQPTVLTSRRDSSSHEETPGSHPLYGH. Polar residues predominate over residues 276–286; that stretch reads TLPNGQPTVLT. Over residues 287–298 the composition is skewed to basic and acidic residues; the sequence is SRRDSSSHEETP. Residues 307–332 form a C2H2-type zinc finger; sequence GECKWPGCETLCEDLGQFIKHLNTEH. A leucine-zipper region spans residues 349 to 370; it reads VQQLEIQLAKESERLQAMMAHL. A Glycyl lysine isopeptide (Lys-Gly) (interchain with G-Cter in SUMO2) cross-link involves residue K378. The disordered stretch occupies residues 407-445; that stretch reads GLVHPPTSAAAPVTPLRPPGLGSASLHGGGPARRRSSDK. The segment at residues 467-559 is a DNA-binding region (fork-head); sequence RPPFTYASLI…KMTGSPTLVK (93 aa). The residue at position 554 (S554) is a Phosphoserine. Residues 602–680 are disordered; it reads PLSHDDVGAP…EEELPGEELS (79 aa). Polar residues predominate over residues 617 to 635; the sequence is SNGSSSPPRLSPPQYSHQV. Acidic residues predominate over residues 668–680; the sequence is RDLEEELPGEELS.

As to quaternary structure, forms homodimers and heterodimers with FOXP1 and FOXP2. Dimerization is required for DNA-binding.

The protein resides in the nucleus. Functionally, transcriptional repressor that represses lung-specific expression. In Homo sapiens (Human), this protein is Forkhead box protein P4 (FOXP4).